Consider the following 579-residue polypeptide: Fatty-acid amide hydrolase 1 (579 aa).

Residues 9-29 (AFSGPSGVALACCLVAAALAL) traverse the membrane as a helical segment. The Cytoplasmic portion of the chain corresponds to 30 to 403 (RWSSRRMARG…GDYVDSCLGD (374 aa)). Lys142 serves as the catalytic Charge relay system. Substrate is bound by residues Met191, Ser217, and 238 to 241 (IGGS). Residue Ser217 is the Charge relay system of the active site. Ser241 serves as the catalytic Acyl-ester intermediate. Ser241 bears the Phosphoserine mark. Residues 404–433 (LISILRLPKWLKGLLAFMLRPLLPRLAGFL) lie within the membrane without spanning it. Residues 434–579 (SSLRPRSAGK…RLMAPGRQPS (146 aa)) lie on the Cytoplasmic side of the membrane.

Belongs to the amidase family. As to quaternary structure, homodimer.

It localises to the endoplasmic reticulum membrane. The protein resides in the golgi apparatus membrane. It catalyses the reaction N-(5Z,8Z,11Z,14Z-eicosatetraenoyl)-ethanolamine + H2O = ethanolamine + (5Z,8Z,11Z,14Z)-eicosatetraenoate. The catalysed reaction is (9Z)-octadecenamide + H2O = (9Z)-octadecenoate + NH4(+). The enzyme catalyses 2-(5Z,8Z,11Z,14Z-eicosatetraenoyl)-glycerol + H2O = glycerol + (5Z,8Z,11Z,14Z)-eicosatetraenoate + H(+). It carries out the reaction 1-O-methyl-(5Z,8Z,11Z,14Z)-eicosatetraenoate + H2O = methanol + (5Z,8Z,11Z,14Z)-eicosatetraenoate + H(+). It catalyses the reaction (9Z,12Z,15Z)-octadecatrienamide + H2O = (9Z,12Z,15Z)-octadecatrienoate + NH4(+). The catalysed reaction is (5Z,8Z,11Z,14Z)-eicosatetraenamide + H2O = (5Z,8Z,11Z,14Z)-eicosatetraenoate + NH4(+). The enzyme catalyses (6Z)-octadecenamide + H2O = (6Z)-octadecenoate + NH4(+). It carries out the reaction (15Z)-tetracosenamide + H2O = (15Z)-tetracosenoate + NH4(+). It catalyses the reaction (8Z,11Z,14Z)-eicosatrienamide + H2O = (8Z,11Z,14Z)-eicosatrienoate + NH4(+). The catalysed reaction is (11Z,14Z,17Z)-eicosatrienamide + H2O = (11Z,14Z,17Z)-eicosatrienoate + NH4(+). The enzyme catalyses (11Z,14Z)-eicosadienamide + H2O = (11Z,14Z)-eicosadienoate + NH4(+). It carries out the reaction (9Z,12Z)-octadecadienamide + H2O = (9Z,12Z)-octadecadienoate + NH4(+). It catalyses the reaction tetradecamide + H2O = tetradecanoate + NH4(+). The catalysed reaction is N-(9Z-octadecenoyl) ethanolamine + H2O = ethanolamine + (9Z)-octadecenoate. The enzyme catalyses N-(9Z-octadecenoyl)-taurine + H2O = taurine + (9Z)-octadecenoate. It carries out the reaction (11Z)-eicosenamide + H2O = (11Z)-eicosenoate + NH4(+). It catalyses the reaction N-(9Z-hexadecenoyl) ethanolamine + H2O = (9Z)-hexadecenoate + ethanolamine. The catalysed reaction is N-octadecanoyl ethanolamine + H2O = octadecanoate + ethanolamine. The enzyme catalyses N-docosanoyl-ethanolamine + H2O = docosanoate + ethanolamine. It carries out the reaction N-tetracosanoyl-taurine + H2O = tetracosanoate + taurine. It catalyses the reaction N-(15Z-tetracosenoyl)-ethanolamine + H2O = (15Z)-tetracosenoate + ethanolamine. The catalysed reaction is N-docosanoyl-taurine + H2O = docosanoate + taurine. The enzyme catalyses N-(15Z-tetracosenoyl)-taurine + H2O = (15Z)-tetracosenoate + taurine. It carries out the reaction N-tricosanoyl-taurine + H2O = tricosanoate + taurine. It catalyses the reaction (9Z)-octadecenoate + glycine = N-(9Z-octadecenoyl)glycine + H2O. The catalysed reaction is N-(5Z,8Z,11Z,14Z)-eicosatetraenoyl-glycine + H2O = (5Z,8Z,11Z,14Z)-eicosatetraenoate + glycine. The enzyme catalyses N-(5Z,8Z,11Z,14Z-eicosatetraenoyl)-L-serine + H2O = (5Z,8Z,11Z,14Z)-eicosatetraenoate + L-serine. Inhibited by trifluoromethyl ketone. In terms of biological role, catalyzes the hydrolysis of endogenous amidated lipids like the sleep-inducing lipid oleamide ((9Z)-octadecenamide), the endocannabinoid anandamide (N-(5Z,8Z,11Z,14Z-eicosatetraenoyl)-ethanolamine), as well as other fatty amides, to their corresponding fatty acids, thereby regulating the signaling functions of these molecules. Also catalyzes the hydrolysis of the endocannabinoid 2-arachidonoylglycerol (2-(5Z,8Z,11Z,14Z-eicosatetraenoyl)-glycerol). FAAH cooperates with PM20D1 in the hydrolysis of amino acid-conjugated fatty acids such as N-fatty acyl glycine and N-fatty acyl-L-serine, thereby acting as a physiological regulator of specific subsets of intracellular, but not of extracellular, N-fatty acyl amino acids. In Sus scrofa (Pig), this protein is Fatty-acid amide hydrolase 1 (FAAH).